The chain runs to 250 residues: 2,3-bisphosphoglycerate-dependent phosphoglycerate mutase (250 aa).

Substrate is bound by residues 10 to 17 (RHGESQWN), 23 to 24 (TG), Arg-62, 89 to 92 (ERHY), Lys-100, 116 to 117 (RR), and 185 to 186 (GN). The active-site Tele-phosphohistidine intermediate is the His-11. Glu-89 (proton donor/acceptor) is an active-site residue.

The protein belongs to the phosphoglycerate mutase family. BPG-dependent PGAM subfamily. Homodimer.

The catalysed reaction is (2R)-2-phosphoglycerate = (2R)-3-phosphoglycerate. Its pathway is carbohydrate degradation; glycolysis; pyruvate from D-glyceraldehyde 3-phosphate: step 3/5. Its function is as follows. Catalyzes the interconversion of 2-phosphoglycerate and 3-phosphoglycerate. This Salmonella choleraesuis (strain SC-B67) protein is 2,3-bisphosphoglycerate-dependent phosphoglycerate mutase.